The primary structure comprises 352 residues: tRNA-specific 2-thiouridylase MnmA (352 aa).

ATP-binding positions include 6 to 13 (AMSGGVDS) and Leu-32. Cys-101 (nucleophile) is an active-site residue. Cys-101 and Cys-194 are joined by a disulfide. Gly-125 is a binding site for ATP. The interval 144–146 (KDQ) is interaction with tRNA. Residue Cys-194 is the Cysteine persulfide intermediate of the active site.

This sequence belongs to the MnmA/TRMU family.

Its subcellular location is the cytoplasm. The enzyme catalyses S-sulfanyl-L-cysteinyl-[protein] + uridine(34) in tRNA + AH2 + ATP = 2-thiouridine(34) in tRNA + L-cysteinyl-[protein] + A + AMP + diphosphate + H(+). In terms of biological role, catalyzes the 2-thiolation of uridine at the wobble position (U34) of tRNA, leading to the formation of s(2)U34. In Frankia casuarinae (strain DSM 45818 / CECT 9043 / HFP020203 / CcI3), this protein is tRNA-specific 2-thiouridylase MnmA.